The primary structure comprises 155 residues: Ribosomal RNA large subunit methyltransferase H (155 aa).

Residues L72, G103, and 122–127 each bind S-adenosyl-L-methionine; that span reads LSPLTL.

It belongs to the RNA methyltransferase RlmH family. In terms of assembly, homodimer.

It is found in the cytoplasm. It catalyses the reaction pseudouridine(1915) in 23S rRNA + S-adenosyl-L-methionine = N(3)-methylpseudouridine(1915) in 23S rRNA + S-adenosyl-L-homocysteine + H(+). Its function is as follows. Specifically methylates the pseudouridine at position 1915 (m3Psi1915) in 23S rRNA. The chain is Ribosomal RNA large subunit methyltransferase H from Pasteurella multocida (strain Pm70).